The chain runs to 186 residues: MKLFVGLGNPGKEYEQTRHNVGFFVIDELAKRWNVSLKTAKFRGLFGTASVSGEKVALCKPLTYMNLSGECVRPLMDYYDIAIDDVIVIYDDLDLPPGKIRLRLKGSSGGHNGVKSLIHHLGTEQFKRIRIGIGRPAGGQPVTDYVLGRFTEEEKPAVDKAVLRAADACEQAVKAPFIQVMNDFNE.

Residue tyrosine 14 coordinates tRNA. The Proton acceptor role is filled by histidine 19. TRNA contacts are provided by tyrosine 64, asparagine 66, and asparagine 112.

Belongs to the PTH family. As to quaternary structure, monomer.

It is found in the cytoplasm. It carries out the reaction an N-acyl-L-alpha-aminoacyl-tRNA + H2O = an N-acyl-L-amino acid + a tRNA + H(+). Hydrolyzes ribosome-free peptidyl-tRNAs (with 1 or more amino acids incorporated), which drop off the ribosome during protein synthesis, or as a result of ribosome stalling. Functionally, catalyzes the release of premature peptidyl moieties from peptidyl-tRNA molecules trapped in stalled 50S ribosomal subunits, and thus maintains levels of free tRNAs and 50S ribosomes. This is Peptidyl-tRNA hydrolase from Geobacillus kaustophilus (strain HTA426).